The following is a 651-amino-acid chain: Probable export ATP-binding/permease protein Pfl01_2215 (651 aa).

One can recognise an ABC transporter domain in the interval 6-244; sequence LQLTGISRSF…LSNEDAVPKS (239 aa). Position 42-49 (42-49) interacts with ATP; sequence GASGSGKS. The next 5 membrane-spanning stretches (helical) occupy residues 250–270, 276–296, 524–544, 585–605, and 614–634; these read LVAS…ALIS, LLTM…SAIG, LALL…IGVM, LGGA…SLFI, and LTSV…FGFV.

The protein belongs to the ABC transporter superfamily. Macrolide exporter (TC 3.A.1.122) family. As to quaternary structure, probably part of a tripartite efflux system, which is composed of an inner membrane transporter, a periplasmic membrane fusion protein, and an outer membrane component.

Its subcellular location is the cell inner membrane. Its function is as follows. Probably part of a tripartite efflux system. The sequence is that of Probable export ATP-binding/permease protein Pfl01_2215 from Pseudomonas fluorescens (strain Pf0-1).